A 370-amino-acid chain; its full sequence is NSFL1 cofactor p47 (370 aa).

A disordered region spans residues 54–73 (SQATPSSVSRGTAPSDNRVT). Phosphoserine occurs at positions 74, 102, and 114. 2 disordered regions span residues 80 to 116 (HDQD…KSPN) and 138 to 157 (TKSP…GYRL). The Nuclear localization signal signature appears at 109-115 (PPRKKSP). Ser140 bears the Phosphoserine; by CDK1 mark. Phosphotyrosine is present on Tyr167. The Nuclear localization signal signature appears at 172 to 175 (RRRH). A phosphoserine mark is found at Ser176, Ser192, and Ser272. One can recognise an SEP domain in the interval 179 to 244 (DVHVVLKLWK…MEDHRDEDFV (66 aa)). Positions 291 to 368 (EAEPTTNIQI…NLLNAVIVQR (78 aa)) constitute a UBX domain.

The protein belongs to the NSFL1C family. As to quaternary structure, part of a ternary complex containing STX5A, NSFL1C and VCP. NSFL1C forms a homotrimer that binds to one end of a VCP homohexamer. The complex binds to membranes enriched in phosphatidylethanolamine-containing lipids and promotes Golgi membrane fusion. Interaction with VCIP135 leads to dissociation of the complex via ATP hydrolysis by VCP. Binds ubiquitin and mono-ubiquitinated proteins via its N-terminal UBA-like domain when bound to VCP. Phosphorylated during mitosis. Phosphorylation inhibits interaction with Golgi membranes and is required for the fragmentation of the Golgi stacks during mitosis. Highly expressed in heart, brain, spleen, lung, liver, muscle, kidney and testis.

It localises to the nucleus. Its subcellular location is the golgi apparatus. It is found in the golgi stack. The protein resides in the chromosome. The protein localises to the cytoplasm. It localises to the cytoskeleton. Its subcellular location is the microtubule organizing center. It is found in the centrosome. In terms of biological role, reduces the ATPase activity of VCP. Necessary for the fragmentation of Golgi stacks during mitosis and for VCP-mediated reassembly of Golgi stacks after mitosis. May play a role in VCP-mediated formation of transitional endoplasmic reticulum (tER). Inhibits the activity of CTSL (in vitro). Together with UBXN2B/p37, regulates the centrosomal levels of kinase AURKA/Aurora A during mitotic progression by promoting AURKA removal from centrosomes in prophase. Also, regulates spindle orientation during mitosis. This is NSFL1 cofactor p47 (Nsfl1c) from Rattus norvegicus (Rat).